The primary structure comprises 504 residues: uncharacterized protein (504 aa).

A run of 3 helical transmembrane segments spans residues 146 to 166, 196 to 216, and 330 to 350; these read TSAGYAKIVGCALGFPVINIA, SSAAILITGAGAIGTALADVL, and SMALTMALLAAAVLYASVAVA. 372-492 contacts a nucleoside 3',5'-cyclic phosphate; that stretch reads FLNIDVPLQA…EIAYGVARTR (121 aa).

Its subcellular location is the cell membrane. This is an uncharacterized protein from Mycobacterium tuberculosis (strain CDC 1551 / Oshkosh).